A 497-amino-acid polypeptide reads, in one-letter code: Ammonium transporter Rh type C (497 aa).

Over 1–9 (MAWNTNLRG) the chain is Cytoplasmic. A helical transmembrane segment spans residues 10-30 (RLPITCLILQVTMVVLFGVFV). The Extracellular segment spans residues 31–61 (RYDIQADAHWWLEKKRKNISSDVENEFYYRY). A glycan (N-linked (GlcNAc...) asparagine) is linked at N48. Residues 62–82 (PSFEDVHAMVFVGFGFLMTYL) form a helical membrane-spanning segment. At 83-93 (QRYGFSAVGFN) the chain is on the cytoplasmic side. Residues 94–114 (FLLAAFGIQWALLMQGWFHFF) form a helical membrane-spanning segment. At 115-125 (EEGHILLSVEN) the chain is on the extracellular side. A helical membrane pass occupies residues 126-145 (LIQADFCVASTCVAFGAVLG). Topologically, residues 146–151 (KISPMQ) are cytoplasmic. A helical transmembrane segment spans residues 152–174 (LLIMTFFQVTLFTVNEFILLNLI). Residues 175 to 179 (EAKDA) are Extracellular-facing. A helical membrane pass occupies residues 180 to 200 (GGSMTIHTFGAYFGLTVTWIL). Over 201-219 (YRKNLEQSKQRQSSVYHSD) the chain is Cytoplasmic. A helical membrane pass occupies residues 220 to 240 (LFAMIGTLFLWIYWPSFNSAS). The Extracellular portion of the chain corresponds to 241–251 (SFHGDTQHRAA). A helical transmembrane segment spans residues 252–272 (LNTYLSLAASVLTTVAVSSVI). Residues 273 to 282 (HKKGKLDMVH) lie on the Cytoplasmic side of the membrane. A helical transmembrane segment spans residues 283 to 303 (IQNATLAGGVGVGTAAEMMLT). A topological domain (extracellular) is located at residue P304. A helical membrane pass occupies residues 305-325 (YGALIVGFFCGILSTLGFAYL). At 326-340 (SPFLESRLRIQDTCG) the chain is on the cytoplasmic side. The helical transmembrane segment at 341 to 361 (IHNLHGIPGIIGGIVGAVTAA) threads the bilayer. The Extracellular segment spans residues 362–395 (YSSPDVYGEPGIVHSFGFGGYKADWTKRMQGRSQ). The helical transmembrane segment at 396 to 416 (IFGLLLSLAMALVGGIIVGFI) threads the bilayer. Residues 417–497 (LKLPFWGQAS…ATVTSSSLVH (81 aa)) lie on the Cytoplasmic side of the membrane.

It belongs to the ammonium transporter (TC 2.A.49) family. Rh subfamily. In terms of assembly, homotrimer. In terms of processing, N-glycosylated. As to expression, expressed by connecting tubule cells and intercalated cells of the collecting duct in kidney (at protein level).

It localises to the cell membrane. Its subcellular location is the apical cell membrane. It catalyses the reaction NH4(+)(in) = NH4(+)(out). It carries out the reaction methylamine(out) = methylamine(in). The catalysed reaction is CO2(out) = CO2(in). In terms of biological role, ammonium transporter involved in the maintenance of acid-base homeostasis. Transports ammonium and its related derivative methylammonium across the plasma membrane of epithelial cells likely contributing to renal transepithelial ammonia transport and ammonia metabolism. Postulated to primarily mediate an electroneutral bidirectional transport of NH3 ammonia species according to a mechanism that implies interaction of an NH4(+) ion with acidic residues of the pore entry followed by dissociation of NH4(+) into NH3 and H(+). As a result NH3 transits through the central pore and is protonated on the extracellular side reforming NH4(+). May act as a CO2 channel providing for renal acid secretion. This is Ammonium transporter Rh type C (Rhcg) from Rattus norvegicus (Rat).